Here is a 343-residue protein sequence, read N- to C-terminus: MMFPGLLAPPAGYPSLLRPTPTLTLPQSLQSAFSGHSSFLVEDLIRISRPPAYLPRSVPTASMSPPRQGAPTALTDTGASDLGSPGPGSRRGGSPPTAFSPASETTFLKFGVNAILSSGPRTETSPALLQSVPPKTFAFPYFEGSFQPFIRSSYFPASSSVVPIPGTFSWPLAARGKPRRGMLRRAVFSDVQRKALEKMFQKQKYISKPDRKKLAAKLGLKDSQVKIWFQNRRMKWRNSKERELLSSGGCREQTLPTKLNPHPDLSDVGQKGPGNEEEEEGPGSPSHRLAYHASSDPQHLRDPRLPGPLPPSPAHSSSPGKPSDFSDSEEEEEGEEQEEITVS.

2 disordered regions span residues 56–100 and 240–343; these read RSVP…TAFS and KERE…ITVS. The homeobox DNA-binding region spans 181 to 240; it reads GMLRRAVFSDVQRKALEKMFQKQKYISKPDRKKLAAKLGLKDSQVKIWFQNRRMKWRNSK. The segment covering 314–323 has biased composition (low complexity); sequence AHSSSPGKPS. Positions 326–343 are enriched in acidic residues; it reads SDSEEEEEGEEQEEITVS.

Belongs to the H2.0 homeobox family.

The protein resides in the nucleus. Its function is as follows. Could have a role in patterning the central nervous system during embryogenesis. Has a key role in regulating the distinct phenotypic features that distinguish two major classes of ventral interneurons, V0 and V1 neurons. Regulates the transcription factor profile, neurotransmitter phenotype, intraspinal migratory path and axonal trajectory of V0 neurons, features that differentiate them from an adjacent set of V1 neurons. The polypeptide is Homeobox protein DBX1 (DBX1) (Homo sapiens (Human)).